The chain runs to 474 residues: tRNA-2-methylthio-N(6)-dimethylallyladenosine synthase (474 aa).

The MTTase N-terminal domain occupies 3–120 (KKLLIKTWGC…LPQMIKDSQS (118 aa)). Residues Cys-12, Cys-49, Cys-83, Cys-157, Cys-161, and Cys-164 each coordinate [4Fe-4S] cluster. Residues 143–375 (RADGVTAFVS…QQQINTQAMR (233 aa)) form the Radical SAM core domain. A TRAM domain is found at 378-441 (RQMLNTEQRI…TNSLRGELVR (64 aa)).

The protein belongs to the methylthiotransferase family. MiaB subfamily. In terms of assembly, monomer. [4Fe-4S] cluster is required as a cofactor.

It localises to the cytoplasm. The enzyme catalyses N(6)-dimethylallyladenosine(37) in tRNA + (sulfur carrier)-SH + AH2 + 2 S-adenosyl-L-methionine = 2-methylsulfanyl-N(6)-dimethylallyladenosine(37) in tRNA + (sulfur carrier)-H + 5'-deoxyadenosine + L-methionine + A + S-adenosyl-L-homocysteine + 2 H(+). In terms of biological role, catalyzes the methylthiolation of N6-(dimethylallyl)adenosine (i(6)A), leading to the formation of 2-methylthio-N6-(dimethylallyl)adenosine (ms(2)i(6)A) at position 37 in tRNAs that read codons beginning with uridine. This chain is tRNA-2-methylthio-N(6)-dimethylallyladenosine synthase, found in Photobacterium profundum (strain SS9).